Here is a 77-residue protein sequence, read N- to C-terminus: Large ribosomal subunit protein bL28 (77 aa).

It belongs to the bacterial ribosomal protein bL28 family.

The protein is Large ribosomal subunit protein bL28 of Polaromonas sp. (strain JS666 / ATCC BAA-500).